The chain runs to 175 residues: NAD(P)H-quinone oxidoreductase subunit J (175 aa).

The protein belongs to the complex I 30 kDa subunit family. As to quaternary structure, NDH-1 can be composed of about 15 different subunits; different subcomplexes with different compositions have been identified which probably have different functions.

It is found in the cellular thylakoid membrane. The catalysed reaction is a plastoquinone + NADH + (n+1) H(+)(in) = a plastoquinol + NAD(+) + n H(+)(out). It carries out the reaction a plastoquinone + NADPH + (n+1) H(+)(in) = a plastoquinol + NADP(+) + n H(+)(out). Its function is as follows. NDH-1 shuttles electrons from an unknown electron donor, via FMN and iron-sulfur (Fe-S) centers, to quinones in the respiratory and/or the photosynthetic chain. The immediate electron acceptor for the enzyme in this species is believed to be plastoquinone. Couples the redox reaction to proton translocation, and thus conserves the redox energy in a proton gradient. Cyanobacterial NDH-1 also plays a role in inorganic carbon-concentration. The chain is NAD(P)H-quinone oxidoreductase subunit J from Nostoc sp. (strain PCC 7120 / SAG 25.82 / UTEX 2576).